The following is a 162-amino-acid chain: Interleukin-15 (162 aa).

Positions 1 to 29 (MRILKPYLRSTSIQCYLCLLLNSHFLTEA) are cleaved as a signal peptide. Residues 30 to 48 (GIHVFILGCISASLPKTEA) constitute a propeptide that is removed on maturation. 2 cysteine pairs are disulfide-bonded: cysteine 83–cysteine 133 and cysteine 90–cysteine 136. Asparagine 104, asparagine 113, asparagine 121, and asparagine 127 each carry an N-linked (GlcNAc...) asparagine glycan.

It belongs to the IL-15/IL-21 family.

Its subcellular location is the secreted. Functionally, cytokine that plays a major role in the development of inflammatory and protective immune responses to microbial invaders and parasites by modulating immune cells of both the innate and adaptive immune systems. Stimulates the proliferation of natural killer cells, T-cells and B-cells and promotes the secretion of several cytokines. In monocytes, induces the production of IL8 and monocyte chemotactic protein 1/CCL2, two chemokines that attract neutrophils and monocytes respectively to sites of infection. Unlike most cytokines, which are secreted in soluble form, IL15 is expressed in association with its high affinity IL15RA on the surface of IL15-producing cells and delivers signals to target cells that express IL2RB and IL2RG receptor subunits. Binding to its receptor triggers the phosphorylation of JAK1 and JAK3 and the recruitment and subsequent phosphorylation of signal transducer and activator of transcription-3/STAT3 and STAT5. In mast cells, induces the rapid tyrosine phosphorylation of STAT6 and thereby controls mast cell survival and release of cytokines such as IL4. The sequence is that of Interleukin-15 (IL15) from Bos taurus (Bovine).